We begin with the raw amino-acid sequence, 394 residues long: Flavin-dependent monooxygenase, oxygenase subunit HsaA (394 aa).

Residues W84, 118–120 (SSY), 141–143 (WSS), R263, 346–347 (AT), and 368–369 (HA) each bind FMN.

It belongs to the HpaH/HsaA monooxygenase family. As to quaternary structure, homotetramer under anaerobic conditions. HsaAB monooxygenase consists of an oxygenase component HsaA and a reductase component HsaB.

It carries out the reaction 3-hydroxy-9,10-secoandrosta-1,3,5(10)-triene-9,17-dione + FMNH2 + O2 = 3,4-dihydroxy-9,10-secoandrosta-1,3,5(10)-triene-9,17-dione + FMN + H2O + H(+). It participates in lipid metabolism; steroid biosynthesis. Its function is as follows. Catalyzes the o-hydroxylation of 3-hydroxy-9,10-secoandrosta-1,3,5(10)-triene-9,17-dione (3-HSA) to 3,4-dihydroxy-9,10-secoandrosta-1,3,5(10)-triene-9,17-dione (3,4-DHSA) in the catabolism of cholesterol. The sequence is that of Flavin-dependent monooxygenase, oxygenase subunit HsaA from Mycobacterium tuberculosis (strain CDC 1551 / Oshkosh).